A 162-amino-acid polypeptide reads, in one-letter code: Cyclic pyranopterin monophosphate synthase (162 aa).

Substrate-binding positions include 75–77 (MCH) and 115–116 (ME). Residue aspartate 130 is part of the active site.

This sequence belongs to the MoaC family. In terms of assembly, homohexamer; trimer of dimers.

The catalysed reaction is (8S)-3',8-cyclo-7,8-dihydroguanosine 5'-triphosphate = cyclic pyranopterin phosphate + diphosphate. The protein operates within cofactor biosynthesis; molybdopterin biosynthesis. In terms of biological role, catalyzes the conversion of (8S)-3',8-cyclo-7,8-dihydroguanosine 5'-triphosphate to cyclic pyranopterin monophosphate (cPMP). This chain is Cyclic pyranopterin monophosphate synthase, found in Geobacillus thermodenitrificans (strain NG80-2).